A 361-amino-acid polypeptide reads, in one-letter code: Chorismate synthase (361 aa).

Positions 48 and 54 each coordinate NADP(+). FMN is bound by residues 125–127 (RSS), 238–239 (NA), Gly278, 293–297 (KPTSS), and Arg319.

The protein belongs to the chorismate synthase family. Homotetramer. FMNH2 serves as cofactor.

It catalyses the reaction 5-O-(1-carboxyvinyl)-3-phosphoshikimate = chorismate + phosphate. It participates in metabolic intermediate biosynthesis; chorismate biosynthesis; chorismate from D-erythrose 4-phosphate and phosphoenolpyruvate: step 7/7. Catalyzes the anti-1,4-elimination of the C-3 phosphate and the C-6 proR hydrogen from 5-enolpyruvylshikimate-3-phosphate (EPSP) to yield chorismate, which is the branch point compound that serves as the starting substrate for the three terminal pathways of aromatic amino acid biosynthesis. This reaction introduces a second double bond into the aromatic ring system. This Enterobacter sp. (strain 638) protein is Chorismate synthase.